Reading from the N-terminus, the 228-residue chain is Translation initiation factor 6 (228 aa).

Belongs to the eIF-6 family.

Functionally, binds to the 50S ribosomal subunit and prevents its association with the 30S ribosomal subunit to form the 70S initiation complex. This Thermococcus gammatolerans (strain DSM 15229 / JCM 11827 / EJ3) protein is Translation initiation factor 6.